The chain runs to 108 residues: Type III secretion system chaperone SseA (108 aa).

Residues Asn-69–Ala-97 are a coiled coil.

Binds to SseB and SseD.

Its subcellular location is the cytoplasm. Its function is as follows. Functions as a type III secretion system (T3SS) chaperone, which is required for SseB and SseD accumulation and secretion. May have a direct role in secretion of SseB and SseD, or may facilitate their correct folding, for efficient secretion and function. Required for survival and replication within epithelial cells and macrophages. In Salmonella typhimurium (strain LT2 / SGSC1412 / ATCC 700720), this protein is Type III secretion system chaperone SseA (sseA).